The primary structure comprises 436 residues: Glutamate-1-semialdehyde 2,1-aminomutase (436 aa).

Lys-269 carries the post-translational modification N6-(pyridoxal phosphate)lysine.

It belongs to the class-III pyridoxal-phosphate-dependent aminotransferase family. HemL subfamily. In terms of assembly, homodimer. The cofactor is pyridoxal 5'-phosphate.

It localises to the cytoplasm. The enzyme catalyses (S)-4-amino-5-oxopentanoate = 5-aminolevulinate. It functions in the pathway porphyrin-containing compound metabolism; protoporphyrin-IX biosynthesis; 5-aminolevulinate from L-glutamyl-tRNA(Glu): step 2/2. It participates in porphyrin-containing compound metabolism; chlorophyll biosynthesis. This is Glutamate-1-semialdehyde 2,1-aminomutase from Heliobacterium modesticaldum (strain ATCC 51547 / Ice1).